Consider the following 400-residue polypeptide: Na(+)/H(+) antiporter NhaA (400 aa).

11 helical membrane-spanning segments follow: residues 26 to 46, 71 to 91, 107 to 127, 137 to 157, 166 to 186, 189 to 209, 225 to 245, 273 to 293, 299 to 319, 340 to 360, and 373 to 393; these read AGGI…NSPL, LIHW…GMEV, IFPA…YWFI, GWAI…ALLS, IFLL…IALF, HGLS…LILL, AILW…GVII, FVIL…GIDV, PLLL…IFGF, IFAV…LASL, and LSRL…YLFL.

The protein belongs to the NhaA Na(+)/H(+) (TC 2.A.33) antiporter family.

Its subcellular location is the cell inner membrane. The catalysed reaction is Na(+)(in) + 2 H(+)(out) = Na(+)(out) + 2 H(+)(in). Its function is as follows. Na(+)/H(+) antiporter that extrudes sodium in exchange for external protons. In Haemophilus influenzae (strain ATCC 51907 / DSM 11121 / KW20 / Rd), this protein is Na(+)/H(+) antiporter NhaA.